The sequence spans 107 residues: Integration host factor subunit beta (107 aa).

Positions 54–107 (NRRPARVGRNPKSGEKVQVPEKHVPHFKPGKELRERVDGRAGEPLKNDEPEDGQ) are disordered. The segment covering 65–101 (KSGEKVQVPEKHVPHFKPGKELRERVDGRAGEPLKND) has biased composition (basic and acidic residues).

The protein belongs to the bacterial histone-like protein family. Heterodimer of an alpha and a beta chain.

In terms of biological role, this protein is one of the two subunits of integration host factor, a specific DNA-binding protein that functions in genetic recombination as well as in transcriptional and translational control. This Burkholderia thailandensis (strain ATCC 700388 / DSM 13276 / CCUG 48851 / CIP 106301 / E264) protein is Integration host factor subunit beta.